A 1244-amino-acid chain; its full sequence is ATP-dependent helicase/nuclease subunit A (1244 aa).

The region spanning 4-477 is the UvrD-like helicase ATP-binding domain; it reads TKWTEEQLSA…IQLYKNFRSR (474 aa). 25–32 contacts ATP; that stretch reads AAAGSGKT. One can recognise a UvrD-like helicase C-terminal domain in the interval 517–811; sequence KNVDDIIGGP…RIMSIHKSKG (295 aa).

It belongs to the helicase family. AddA subfamily. Heterodimer of AddA and AddB/RexB. Mg(2+) is required as a cofactor.

It carries out the reaction Couples ATP hydrolysis with the unwinding of duplex DNA by translocating in the 3'-5' direction.. It catalyses the reaction ATP + H2O = ADP + phosphate + H(+). In terms of biological role, the heterodimer acts as both an ATP-dependent DNA helicase and an ATP-dependent, dual-direction single-stranded exonuclease. Recognizes the chi site generating a DNA molecule suitable for the initiation of homologous recombination. The AddA nuclease domain is required for chi fragment generation; this subunit has the helicase and 3' -&gt; 5' nuclease activities. This is ATP-dependent helicase/nuclease subunit A from Clostridium botulinum (strain Alaska E43 / Type E3).